The primary structure comprises 106 residues: ATP-dependent Clp protease adapter protein ClpS (106 aa).

It belongs to the ClpS family. In terms of assembly, binds to the N-terminal domain of the chaperone ClpA.

In terms of biological role, involved in the modulation of the specificity of the ClpAP-mediated ATP-dependent protein degradation. This is ATP-dependent Clp protease adapter protein ClpS from Methylococcus capsulatus (strain ATCC 33009 / NCIMB 11132 / Bath).